The primary structure comprises 179 residues: MPKPSRGPRMCSGPDHERLVLANMSASLFLNKKLRTTEARAKRLRPFAEKLVTLSKRGGLHSRRRALSILRNKAALHELFTNIAPLVEDRNGGYTRITKVGFRSGDGAPMALIELILEPVSARTRGTDTLPDTVTDTGPDSAPDPVPGSEPGSAAGDLPDADTAPADPGESSSNQRVIR.

Positions 123 to 179 are disordered; it reads RTRGTDTLPDTVTDTGPDSAPDPVPGSEPGSAAGDLPDADTAPADPGESSSNQRVIR. Positions 154 to 168 are enriched in low complexity; the sequence is AAGDLPDADTAPADP. The segment covering 170-179 has biased composition (polar residues); it reads ESSSNQRVIR.

The protein belongs to the bacterial ribosomal protein bL17 family. In terms of assembly, part of the 50S ribosomal subunit. Contacts protein L32.

This chain is Large ribosomal subunit protein bL17, found in Tropheryma whipplei (strain Twist) (Whipple's bacillus).